A 377-amino-acid chain; its full sequence is Histone deacetylase 8 (377 aa).

A histone deacetylase region spans residues 5 to 336 (RVDVFWHEGM…LHAMLEGVLK (332 aa)). Histidine 145 functions as the Proton donor/acceptor in the catalytic mechanism. Zn(2+)-binding residues include aspartate 182, histidine 184, and aspartate 274.

This sequence belongs to the histone deacetylase family. The cofactor is Zn(2+). In terms of tissue distribution, expressed in stems, leaves, flowers, siliques and mature seeds.

The protein resides in the nucleus. The protein localises to the cytoplasm. It catalyses the reaction N(6)-acetyl-L-lysyl-[histone] + H2O = L-lysyl-[histone] + acetate. Its function is as follows. Responsible for the deacetylation of lysine residues on the N-terminal part of the core histones (H2A, H2B, H3 and H4). Histone deacetylation gives a tag for epigenetic repression and plays an important role in transcriptional regulation, cell cycle progression and developmental events. Histone deacetylases act via the formation of large multiprotein complexes. The sequence is that of Histone deacetylase 8 from Arabidopsis thaliana (Mouse-ear cress).